A 190-amino-acid polypeptide reads, in one-letter code: Xanthine phosphoribosyltransferase (190 aa).

Xanthine is bound by residues L20 and N27. 128–132 is a 5-phospho-alpha-D-ribose 1-diphosphate binding site; sequence ANGHA. Residue K156 coordinates xanthine.

This sequence belongs to the purine/pyrimidine phosphoribosyltransferase family. Xpt subfamily. In terms of assembly, homodimer.

It is found in the cytoplasm. The enzyme catalyses XMP + diphosphate = xanthine + 5-phospho-alpha-D-ribose 1-diphosphate. It functions in the pathway purine metabolism; XMP biosynthesis via salvage pathway; XMP from xanthine: step 1/1. Converts the preformed base xanthine, a product of nucleic acid breakdown, to xanthosine 5'-monophosphate (XMP), so it can be reused for RNA or DNA synthesis. In Pseudomonas aeruginosa (strain ATCC 15692 / DSM 22644 / CIP 104116 / JCM 14847 / LMG 12228 / 1C / PRS 101 / PAO1), this protein is Xanthine phosphoribosyltransferase.